Here is a 169-residue protein sequence, read N- to C-terminus: uncharacterized protein (169 aa).

An N-acetyltransferase domain is found at 4-160 (IEVKRLLVNY…EGVKEQLSED (157 aa)).

This is an uncharacterized protein from Halalkalibacterium halodurans (strain ATCC BAA-125 / DSM 18197 / FERM 7344 / JCM 9153 / C-125) (Bacillus halodurans).